The chain runs to 419 residues: Phosphoglycerate kinase (419 aa).

The (2R)-3-phosphoglycerate site is built by V24, D25, F26, N27, R40, S63, H64, G66, R67, L122, R123, H169, and R170. G213 provides a ligand contact to ADP. Residue G213 participates in CDP binding. The AMP site is built by A214 and K215. A214 serves as a coordination point for ATP. A214 contributes to the Mg(2+) binding site. A217 and D218 together coordinate Mg(2+). Residue D218 coordinates CDP. K219 is an AMP binding site. Position 219 (K219) interacts with ATP. Residue G237 coordinates ADP. G237 contacts CDP. G238 and G313 together coordinate AMP. Residues G238 and G313 each contribute to the ATP site. CDP contacts are provided by G338 and F343. F343 contacts ADP. E344 lines the AMP pocket. Residues E344, D375, and T376 each contribute to the ATP site. D375 provides a ligand contact to Mg(2+).

The protein belongs to the phosphoglycerate kinase family. Monomer. Mg(2+) is required as a cofactor.

It carries out the reaction (2R)-3-phosphoglycerate + ATP = (2R)-3-phospho-glyceroyl phosphate + ADP. It functions in the pathway carbohydrate degradation; glycolysis; pyruvate from D-glyceraldehyde 3-phosphate: step 2/5. The polypeptide is Phosphoglycerate kinase (PGK) (Sterkiella nova (Ciliate)).